A 262-amino-acid chain; its full sequence is Pyridoxine 5'-phosphate synthase (262 aa).

Asn-6 is a binding site for 3-amino-2-oxopropyl phosphate. A 1-deoxy-D-xylulose 5-phosphate-binding site is contributed by 8–9; it reads DH. Residue Arg-17 participates in 3-amino-2-oxopropyl phosphate binding. His-43 functions as the Proton acceptor in the catalytic mechanism. 1-deoxy-D-xylulose 5-phosphate is bound by residues Arg-45 and His-50. The Proton acceptor role is filled by Glu-70. Residue Thr-102 participates in 1-deoxy-D-xylulose 5-phosphate binding. The active-site Proton donor is the His-215. Residues Gly-216 and 237–238 contribute to the 3-amino-2-oxopropyl phosphate site; that span reads GH.

It belongs to the PNP synthase family. In terms of assembly, homooctamer; tetramer of dimers.

It is found in the cytoplasm. It catalyses the reaction 3-amino-2-oxopropyl phosphate + 1-deoxy-D-xylulose 5-phosphate = pyridoxine 5'-phosphate + phosphate + 2 H2O + H(+). It functions in the pathway cofactor biosynthesis; pyridoxine 5'-phosphate biosynthesis; pyridoxine 5'-phosphate from D-erythrose 4-phosphate: step 5/5. In terms of biological role, catalyzes the complicated ring closure reaction between the two acyclic compounds 1-deoxy-D-xylulose-5-phosphate (DXP) and 3-amino-2-oxopropyl phosphate (1-amino-acetone-3-phosphate or AAP) to form pyridoxine 5'-phosphate (PNP) and inorganic phosphate. In Helicobacter acinonychis (strain Sheeba), this protein is Pyridoxine 5'-phosphate synthase.